The chain runs to 74 residues: Transcription attenuation protein MtrB (74 aa).

Belongs to the MtrB family. In terms of assembly, oligomer of 11 identical subunits arranged in doughnut-like structure.

Functionally, required for transcription attenuation control in the Trp operon. This trans-acting factor seems to recognize a 10 bases nucleotide sequence in the Trp leader transcript causing transcription termination. Binds the leader RNA only in presence of L-tryptophan. The protein is Transcription attenuation protein MtrB of Geobacillus sp. (strain WCH70).